The chain runs to 196 residues: Protein hunchback (196 aa).

Disordered stretches follow at residues 16–60 (SHHH…NTNL) and 90–196 (AMTP…KYMA). Residues 17-30 (HHHHHHHAHHSYHQ) show a composition bias toward basic residues. Polar residues predominate over residues 92–103 (TPSSSNNDQNSP). Low complexity predominate over residues 125–144 (PTATTTTTPAAAAPTTTAAT). Residues 176-196 (AEREKEHDLMSNSSEDMKYMA) show a composition bias toward basic and acidic residues.

It belongs to the hunchback C2H2-type zinc-finger protein family.

It is found in the nucleus. Gap class segmentation protein that controls development of head structures. In Drosophila silvestris (Fruit fly), this protein is Protein hunchback (hb).